Reading from the N-terminus, the 201-residue chain is Urease accessory protein UreG (201 aa).

Residue 11–18 (GPVGSGKT) coordinates GTP.

Belongs to the SIMIBI class G3E GTPase family. UreG subfamily. In terms of assembly, homodimer. UreD, UreF and UreG form a complex that acts as a GTP-hydrolysis-dependent molecular chaperone, activating the urease apoprotein by helping to assemble the nickel containing metallocenter of UreC. The UreE protein probably delivers the nickel.

The protein resides in the cytoplasm. Facilitates the functional incorporation of the urease nickel metallocenter. This process requires GTP hydrolysis, probably effectuated by UreG. This chain is Urease accessory protein UreG, found in Synechococcus sp. (strain CC9902).